A 111-amino-acid polypeptide reads, in one-letter code: Large ribosomal subunit protein uL22 (111 aa).

Belongs to the universal ribosomal protein uL22 family. Part of the 50S ribosomal subunit.

This protein binds specifically to 23S rRNA; its binding is stimulated by other ribosomal proteins, e.g. L4, L17, and L20. It is important during the early stages of 50S assembly. It makes multiple contacts with different domains of the 23S rRNA in the assembled 50S subunit and ribosome. Functionally, the globular domain of the protein is located near the polypeptide exit tunnel on the outside of the subunit, while an extended beta-hairpin is found that lines the wall of the exit tunnel in the center of the 70S ribosome. The chain is Large ribosomal subunit protein uL22 from Acholeplasma laidlawii.